The chain runs to 513 residues: Anthranilate synthase component 1 (513 aa).

L-tryptophan contacts are provided by residues Ser-50 and 279–281 (PYM). Residue 314-315 (GT) participates in chorismate binding. Residue Glu-341 coordinates Mg(2+). Chorismate contacts are provided by residues Tyr-429, Arg-449, 463–465 (GAG), and Gly-465. Glu-478 lines the Mg(2+) pocket.

The protein belongs to the anthranilate synthase component I family. Heterotetramer consisting of two non-identical subunits: a beta subunit (TrpG) and a large alpha subunit (TrpE). The cofactor is Mg(2+).

It carries out the reaction chorismate + L-glutamine = anthranilate + pyruvate + L-glutamate + H(+). Its pathway is amino-acid biosynthesis; L-tryptophan biosynthesis; L-tryptophan from chorismate: step 1/5. With respect to regulation, feedback inhibited by tryptophan. Functionally, part of a heterotetrameric complex that catalyzes the two-step biosynthesis of anthranilate, an intermediate in the biosynthesis of L-tryptophan. In the first step, the glutamine-binding beta subunit (TrpG) of anthranilate synthase (AS) provides the glutamine amidotransferase activity which generates ammonia as a substrate that, along with chorismate, is used in the second step, catalyzed by the large alpha subunit of AS (TrpE) to produce anthranilate. In the absence of TrpG, TrpE can synthesize anthranilate directly from chorismate and high concentrations of ammonia. The sequence is that of Anthranilate synthase component 1 (trpE) from Bacillus pumilus (Bacillus mesentericus).